The following is a 101-amino-acid chain: Small ribosomal subunit protein uS14 (101 aa).

The protein belongs to the universal ribosomal protein uS14 family. In terms of assembly, part of the 30S ribosomal subunit. Contacts proteins S3 and S10.

In terms of biological role, binds 16S rRNA, required for the assembly of 30S particles and may also be responsible for determining the conformation of the 16S rRNA at the A site. The polypeptide is Small ribosomal subunit protein uS14 (Ruegeria sp. (strain TM1040) (Silicibacter sp.)).